The sequence spans 384 residues: Succinyl-diaminopimelate desuccinylase (384 aa).

H69 contacts Zn(2+). D71 is a catalytic residue. D103 provides a ligand contact to Zn(2+). The Proton acceptor role is filled by E137. Positions 138, 166, and 355 each coordinate Zn(2+).

Belongs to the peptidase M20A family. DapE subfamily. In terms of assembly, homodimer. Zn(2+) is required as a cofactor. The cofactor is Co(2+).

It carries out the reaction N-succinyl-(2S,6S)-2,6-diaminopimelate + H2O = (2S,6S)-2,6-diaminopimelate + succinate. It participates in amino-acid biosynthesis; L-lysine biosynthesis via DAP pathway; LL-2,6-diaminopimelate from (S)-tetrahydrodipicolinate (succinylase route): step 3/3. In terms of biological role, catalyzes the hydrolysis of N-succinyl-L,L-diaminopimelic acid (SDAP), forming succinate and LL-2,6-diaminopimelate (DAP), an intermediate involved in the bacterial biosynthesis of lysine and meso-diaminopimelic acid, an essential component of bacterial cell walls. This is Succinyl-diaminopimelate desuccinylase from Rickettsia canadensis (strain McKiel).